A 56-amino-acid polypeptide reads, in one-letter code: Preprotein translocase subunit SecG (56 aa).

Over 1–30 the chain is Cytoplasmic; that stretch reads MARKDKKTLPASGAGIVRYFNDDTAGVKLS. A helical membrane pass occupies residues 31–52; it reads PKQVVIGTIIVALICIALRFTT. Over 53-56 the chain is Extracellular; sequence SVGY.

It belongs to the SEC61-beta family. Component of the protein translocase complex. Heterotrimer consisting of alpha (SecY), beta (SecG) and gamma (SecE) subunits. Can form oligomers of the heterotrimer.

It is found in the cell membrane. In terms of biological role, involved in protein export. The function of the beta subunit is unknown, but it may be involved in stabilization of the trimeric complex. This is Preprotein translocase subunit SecG from Methanosphaera stadtmanae (strain ATCC 43021 / DSM 3091 / JCM 11832 / MCB-3).